Here is a 214-residue protein sequence, read N- to C-terminus: Pyridoxine/pyridoxamine 5'-phosphate oxidase (214 aa).

Residues 8–11 (RTNY) and lysine 66 each bind substrate. FMN contacts are provided by residues 61-66 (RIVLIK), 76-77 (FT), arginine 82, lysine 83, and glutamine 105. 3 residues coordinate substrate: tyrosine 123, arginine 127, and serine 131. FMN is bound by residues 140–141 (QS) and tryptophan 184. 190 to 192 (RLH) serves as a coordination point for substrate. Arginine 194 contacts FMN.

Belongs to the pyridoxamine 5'-phosphate oxidase family. Homodimer. FMN serves as cofactor.

The catalysed reaction is pyridoxamine 5'-phosphate + O2 + H2O = pyridoxal 5'-phosphate + H2O2 + NH4(+). It catalyses the reaction pyridoxine 5'-phosphate + O2 = pyridoxal 5'-phosphate + H2O2. Its pathway is cofactor metabolism; pyridoxal 5'-phosphate salvage; pyridoxal 5'-phosphate from pyridoxamine 5'-phosphate: step 1/1. It participates in cofactor metabolism; pyridoxal 5'-phosphate salvage; pyridoxal 5'-phosphate from pyridoxine 5'-phosphate: step 1/1. Catalyzes the oxidation of either pyridoxine 5'-phosphate (PNP) or pyridoxamine 5'-phosphate (PMP) into pyridoxal 5'-phosphate (PLP). This Burkholderia mallei (strain NCTC 10247) protein is Pyridoxine/pyridoxamine 5'-phosphate oxidase.